The chain runs to 354 residues: DNA polymerase IV (354 aa).

Positions 3–188 constitute a UmuC domain; sequence VIFVDFDYFF…LDIDEIPGIG (186 aa). Mg(2+) contacts are provided by Asp7 and Asp105. Glu106 is a catalytic residue.

It belongs to the DNA polymerase type-Y family. In terms of assembly, monomer. The cofactor is Mg(2+).

The protein resides in the cytoplasm. The enzyme catalyses DNA(n) + a 2'-deoxyribonucleoside 5'-triphosphate = DNA(n+1) + diphosphate. Its function is as follows. Poorly processive, error-prone DNA polymerase involved in untargeted mutagenesis. Copies undamaged DNA at stalled replication forks, which arise in vivo from mismatched or misaligned primer ends. These misaligned primers can be extended by PolIV. Exhibits no 3'-5' exonuclease (proofreading) activity. May be involved in translesional synthesis. The polypeptide is DNA polymerase IV (Sulfolobus acidocaldarius (strain ATCC 33909 / DSM 639 / JCM 8929 / NBRC 15157 / NCIMB 11770)).